Reading from the N-terminus, the 510-residue chain is Probable lysine--tRNA ligase, cytoplasmic (510 aa).

Belongs to the class-II aminoacyl-tRNA synthetase family. As to quaternary structure, homodimer.

It localises to the cytoplasm. The enzyme catalyses tRNA(Lys) + L-lysine + ATP = L-lysyl-tRNA(Lys) + AMP + diphosphate. This is Probable lysine--tRNA ligase, cytoplasmic from Encephalitozoon cuniculi (strain GB-M1) (Microsporidian parasite).